A 201-amino-acid chain; its full sequence is 3-isopropylmalate dehydratase small subunit (201 aa).

It belongs to the LeuD family. LeuD type 1 subfamily. Heterodimer of LeuC and LeuD.

The enzyme catalyses (2R,3S)-3-isopropylmalate = (2S)-2-isopropylmalate. The protein operates within amino-acid biosynthesis; L-leucine biosynthesis; L-leucine from 3-methyl-2-oxobutanoate: step 2/4. In terms of biological role, catalyzes the isomerization between 2-isopropylmalate and 3-isopropylmalate, via the formation of 2-isopropylmaleate. The protein is 3-isopropylmalate dehydratase small subunit of Buchnera aphidicola subsp. Baizongia pistaciae (strain Bp).